The primary structure comprises 1207 residues: DNA-directed RNA polymerase subunit beta' (1207 aa).

Residues Cys60, Cys62, Cys75, and Cys78 each contribute to the Zn(2+) site. Mg(2+) contacts are provided by Asp449, Asp451, and Asp453. Positions 822, 896, 903, and 906 each coordinate Zn(2+).

Belongs to the RNA polymerase beta' chain family. In terms of assembly, the RNAP catalytic core consists of 2 alpha, 1 beta, 1 beta' and 1 omega subunit. When a sigma factor is associated with the core the holoenzyme is formed, which can initiate transcription. Mg(2+) is required as a cofactor. Requires Zn(2+) as cofactor.

The catalysed reaction is RNA(n) + a ribonucleoside 5'-triphosphate = RNA(n+1) + diphosphate. Its function is as follows. DNA-dependent RNA polymerase catalyzes the transcription of DNA into RNA using the four ribonucleoside triphosphates as substrates. This is DNA-directed RNA polymerase subunit beta' from Staphylococcus aureus (strain MRSA252).